A 314-amino-acid chain; its full sequence is Secreted frizzled-related protein 1 (314 aa).

A signal peptide spans 1–31 (MGVGRSARGRGGAASGVLLALAAALLAAGSA). One can recognise an FZ domain in the interval 53–169 (TKPPQCVDIP…FPEGDVCIAM (117 aa)). 5 disulfides stabilise this stretch: Cys58–Cys121, Cys68–Cys114, Cys105–Cys140, Cys129–Cys166, and Cys133–Cys157. N-linked (GlcNAc...) asparagine glycosylation occurs at Asn173. Cystine bridges form between Cys186-Cys256, Cys189-Cys258, and Cys203-Cys306. Positions 186-306 (CPPCDNELKS…FMKRMKNHEC (121 aa)) constitute an NTR domain.

It belongs to the secreted frizzled-related protein (sFRP) family. As to quaternary structure, interacts with WNT8, WNT1, WNT2, WNT4 and FRZD6. Interacts with MYOC. In terms of tissue distribution, highly expressed in kidney and embryonic heart. Also highly expressed in the eye, where it is principally localized to the ciliary body and the lens epithelium. Weaker expression in heart, lung and brain. In the brain, is expressed exclusively in the choroid plexus.

It localises to the secreted. Functionally, soluble frizzled-related proteins (sFRPS) function as modulators of Wnt signaling through direct interaction with Wnts. They have a role in regulating cell growth and differentiation in specific cell types. SFRP1 decreases intracellular beta-catenin levels. Has antiproliferative effects on vascular cells, in vitro and in vivo, and can induce, in vivo, an angiogenic response. In vascular cell cycle, delays the G1 phase and entry into the S phase. In kidney development, inhibits tubule formation and bud growth in metanephroi. Inhibits WNT1/WNT4-mediated TCF-dependent transcription. This Mus musculus (Mouse) protein is Secreted frizzled-related protein 1.